The following is a 277-amino-acid chain: Proteasome assembly chaperone 1 (277 aa).

The protein belongs to the PSMG1 family. Forms a heterodimer with psmg2. Degraded by the proteasome upon completion of 20S proteasome maturation.

The protein localises to the cytoplasm. The protein resides in the endoplasmic reticulum. Its function is as follows. Chaperone protein which promotes assembly of the 20S proteasome as part of a heterodimer with psmg2. The polypeptide is Proteasome assembly chaperone 1 (Danio rerio (Zebrafish)).